Reading from the N-terminus, the 809-residue chain is Lethal factor (809 aa).

A signal peptide spans 1-33 (MNIKKEFIKVISMSCLVTAITLSGPVFIPLVQG). A disordered region spans residues 39 to 66 (DVGMHVKEKEKNKDENKRKDEERNKTQE). Residues 40-66 (VGMHVKEKEKNKDENKRKDEERNKTQE) are compositionally biased toward basic and acidic residues. Positions 60–295 (ERNKTQEEHL…NLSLEELKDQ (236 aa)) are i; PA-binding region. One can recognise an ATLF-like 1 domain in the interval 70-282 (KEIMKHIVKI…AFNYMDKFNE (213 aa)). Residues 296 to 330 (RMLARYEKWEKIKQHYQHWSDSLSEEGRGLLKKLQ) are IIA. 5 consecutive repeat copies span residues 315–333 (SDSL…QIPI), 342–357 (HSLS…RIQI), 360–378 (SDFL…QIDI), 380–397 (DSLS…QVDS), and 399–416 (NPLS…KLDI). Positions 315 to 416 (SDSLSEEGRG…EFLKKLKLDI (102 aa)) are 5 X approximate repeats. The segment at 336–416 (KKDDIIHSLS…EFLKKLKLDI (81 aa)) is III. Residues 420-583 (DINQRLQDTG…EYIRIDAKVV (164 aa)) form an IIB region. Residues 585–809 (KSKIDTKIQE…NDQIKFIINS (225 aa)) form an IV region. Positions 609 to 804 (LPKYTKLITF…TFQFINDQIK (196 aa)) constitute an ATLF-like 2 domain. H719 provides a ligand contact to Zn(2+). E720 functions as the Proton acceptor in the catalytic mechanism. Residues H723, Y761, and E768 each contribute to the Zn(2+) site.

Belongs to the peptidase M34 family. As to quaternary structure, interacts (via ATLF domain 1) with the cleaved form of protective antigen (PA-63) anthrax toxin; interaction is required for LF translocation into the host cytoplasm. Interacts with PA-63 homooligomers (either homoheptamers or homooctamers): three molecules of LF bind the PA-63 homoheptamer to form the PA(7)LF(3) complex, in which the relative position of the N-terminal alpha-helices in the three LFs determines which factor is translocated first. It depends on Zn(2+) as a cofactor.

It localises to the secreted. The protein resides in the host cytoplasm. It is found in the host cytosol. The enzyme catalyses Preferred amino acids around the cleavage site can be denoted BBBBxHx-|-H, in which B denotes Arg or Lys, H denotes a hydrophobic amino acid, and x is any amino acid. The only known protein substrates are mitogen-activated protein (MAP) kinase kinases.. Its activity is regulated as follows. Inhibited by NSC-12155 (1,3-Bis(2-methyl-4-aminoquinoline-6-yl)ure). Inhibited by phenoxyacetic acid bearing alpha-benzyl substituents on the C2-side chain. Inhibited by sulfonamide hydroxamate with benzylic additions at the sulfonamide nitrogen. Also inhibited by sulfonamide hydroxamates with alkylation at the sulfonamide nitrogen. Inhibited by hydroxamic acid inhibitors. Lethal factor (LF), which constitutes one of the three proteins composing the anthrax toxin, is able to trigger rapid cell death in macrophages. Acts as a protease that cleaves the N-terminal of most dual specificity mitogen-activated protein kinase kinases (MAPKKs or MAP2Ks) (except for MAP2K5): cleavage invariably occurs within the N-terminal proline-rich region preceding the kinase domain, thus disrupting a sequence involved in directing specific protein-protein interactions necessary for the assembly of signaling complexes. Also cleaves mouse Nlrp1b: host Nlrp1b cleavage promotes ubiquitination and degradation of the N-terminal part of Nlrp1b by the proteasome, thereby releasing the cleaved C-terminal part of Nlrp1b, which polymerizes and forms the Nlrp1b inflammasome followed by host cell pyroptosis. Able to cleave mouse Nlrp1b alleles 1 and 5, while it is not able to cleave Nlrp1b alleles 2, 3 and 4. In contrast, does not cleave NLRP1 human ortholog. LF is not toxic by itself and only acts as a lethal factor when associated with protective antigen (PA) to form the lethal toxin (LeTx): PA is required for LF translocation into the host cytosol. In Bacillus anthracis, this protein is Lethal factor.